The primary structure comprises 417 residues: MSLSNKLTLDKLNVKGKRVVMRVDFNVPMKNNQITNNQRIKAAVPSIKFCLDNGAKSVVLMSHLGRPDVGPMPDKYSLQPVAVELKSLLGKDVLFLKDCVGPEVEKACADPAAGSVILLENLRFHVEEEGKGKDASGNKVKAEPAKIETFRASLSKLGDVYVNDAFGTAHRAHSSMVGVNLPQKAGGFLMKKELNYFAKALESPERPFLAILGGAKVADKIQLINNMLDKVNEMIIGGGMAFTFLKVLNNMEIGTSLFDEEGAKIVKNLMSKAEKNGVKITLPVDFVTADKFDENAKTGQATVASGIPAGWMGLDCGTESSKKYAEAVARAKQIVWNGPVGVFEWEAFARGTKALMDEVVKATSRGCITIIGGGDTATCCAKWNTEDKVSHVSTGGGASLELLEGKVLPGVDALSNV.

An N-acetylserine modification is found at Ser-2. Phosphoserine is present on residues Ser-2 and Ser-4. The interval 2 to 186 (SLSNKLTLDK…VGVNLPQKAG (185 aa)) is globular domain-1. An N6-succinyllysine modification is found at Lys-6. Residue Lys-11 is modified to N6-acetyllysine. (2R)-3-phosphoglycerate is bound by residues Val-23, Asp-24, Phe-25, Asn-26, Gln-38, and Arg-39. Residues 38–43 (QRIKAA) are mitochondrial targeting region exposed following cis-trans isomerization by PIN1 and recognized by the TOM complex for mitochondrial translocation of the protein. An N6-acetyllysine; alternate modification is found at Lys-48. Residue Lys-48 is modified to N6-succinyllysine; alternate. Residues Ser-62, His-63, Gly-65, and Arg-66 each contribute to the (2R)-3-phosphoglycerate site. Position 75 is an N6-acetyllysine (Lys-75). Tyr-76 is modified (phosphotyrosine). 2 positions are modified to N6-acetyllysine: Lys-86 and Lys-91. Position 97 is an N6-acetyllysine; alternate (Lys-97). Residue Lys-97 is modified to N6-(2-hydroxyisobutyryl)lysine; alternate. Leu-122 and Arg-123 together coordinate (2R)-3-phosphoglycerate. Lys-131 is modified (N6-acetyllysine; alternate). Residue Lys-131 is modified to N6-malonyllysine; alternate. Lys-146 is modified (N6-acetyllysine). Residues His-170 and Arg-171 each coordinate (2R)-3-phosphoglycerate. A linker region spans residues 187-190 (GFLM). At Lys-191 the chain carries N6-succinyllysine. Positions 191–417 (KKELNYFAKA…LPGVDALSNV (227 aa)) are globular domain-2. Tyr-196 carries the phosphotyrosine modification. Lys-199 carries the post-translational modification N6-acetyllysine. Ser-203 carries the phosphoserine modification. Gly-214 is a binding site for ADP. Gly-214 serves as a coordination point for CDP. Residues Ala-215 and Lys-216 each contribute to the AMP site. Ala-215 serves as a coordination point for ATP. Ala-215 serves as a coordination point for Mg(2+). N6-(2-hydroxyisobutyryl)lysine is present on Lys-216. Positions 218 and 219 each coordinate Mg(2+). A CDP-binding site is contributed by Asp-219. Residue Lys-220 coordinates AMP. Lys-220 is a binding site for ATP. At Lys-220 the chain carries N6-(2-hydroxyisobutyryl)lysine. An ADP-binding site is contributed by Gly-238. Gly-238 contributes to the CDP binding site. Position 239 (Gly-239) interacts with AMP. Gly-239 lines the ATP pocket. Residues Lys-267 and Lys-291 each carry the N6-acetyllysine modification. Gly-313 serves as a coordination point for AMP. An ATP-binding site is contributed by Gly-313. Position 323 is an N6-(2-hydroxyisobutyryl)lysine (Lys-323). The CDP site is built by Gly-338, Val-340, and Phe-343. An ADP-binding site is contributed by Phe-343. Glu-344 lines the AMP pocket. ATP is bound at residue Glu-344. The residue at position 361 (Lys-361) is an N6-acetyllysine. Residues Asp-375 and Thr-376 each contribute to the ATP site. Asp-375 contributes to the Mg(2+) binding site. Residues 406 to 417 (KVLPGVDALSNV) form an associated with globular domain 1 region.

This sequence belongs to the phosphoglycerate kinase family. Monomer. Interacts with kinase MAPK1/ERK2; the interaction is direct, occurs under hypoxic conditions, and promotes its interaction with PIN1. Interacts with peptidyl-prolyl cis-trans isomerase PIN1; the interaction is direct, occurs under hypoxic conditions, and targets the protein to the mitochondrion by promoting interactions with the TOM complex. Interacts with mitochondrial circRNA mcPGK1 (via its 2nd stem-loop); the interaction is direct and targets the protein to the mitochondrion by promoting interactions with the TOM complex. Interacts with pyruvate dehydrogenase kinase PDK1; the interaction is direct, occurs under hypoxic conditions and leads to PDK1-mediated inhibition of pyruvate dehydrogenase complex activity. Mg(2+) serves as cofactor. In terms of processing, phosphorylated at Ser-203 by MAPK1/ERK2 under hypoxic conditions, which promotes its mitochondrial targeting.

The protein resides in the cytoplasm. The protein localises to the cytosol. It is found in the mitochondrion matrix. The enzyme catalyses (2R)-3-phosphoglycerate + ATP = (2R)-3-phospho-glyceroyl phosphate + ADP. The catalysed reaction is L-seryl-[protein] + ATP = O-phospho-L-seryl-[protein] + ADP + H(+). It functions in the pathway carbohydrate degradation; glycolysis; pyruvate from D-glyceraldehyde 3-phosphate: step 2/5. Functionally, catalyzes one of the two ATP producing reactions in the glycolytic pathway via the reversible conversion of 1,3-diphosphoglycerate to 3-phosphoglycerate. Both L- and D- forms of purine and pyrimidine nucleotides can be used as substrates, but the activity is much lower on pyrimidines. In addition to its role as a glycolytic enzyme, it seems that PGK-1 acts as a polymerase alpha cofactor protein (primer recognition protein). Acts as a protein kinase when localized to the mitochondrion where it phosphorylates pyruvate dehydrogenase kinase PDK1 to inhibit pyruvate dehydrogenase complex activity and suppress the formation of acetyl-coenzyme A from pyruvate, and consequently inhibit oxidative phosphorylation and promote glycolysis. May play a role in sperm motility. In Equus caballus (Horse), this protein is Phosphoglycerate kinase 1 (PGK1).